The chain runs to 264 residues: Type III pantothenate kinase (264 aa).

An ATP-binding site is contributed by 6 to 13; that stretch reads DIGNTQTV. Residues tyrosine 100 and 107–110 each bind substrate; that span reads GADR. The active-site Proton acceptor is aspartate 109. Aspartate 129 is a K(+) binding site. Threonine 132 provides a ligand contact to ATP. A substrate-binding site is contributed by threonine 185.

Belongs to the type III pantothenate kinase family. As to quaternary structure, homodimer. It depends on NH4(+) as a cofactor. K(+) is required as a cofactor.

It is found in the cytoplasm. The enzyme catalyses (R)-pantothenate + ATP = (R)-4'-phosphopantothenate + ADP + H(+). It functions in the pathway cofactor biosynthesis; coenzyme A biosynthesis; CoA from (R)-pantothenate: step 1/5. Catalyzes the phosphorylation of pantothenate (Pan), the first step in CoA biosynthesis. This is Type III pantothenate kinase from Rubrobacter xylanophilus (strain DSM 9941 / JCM 11954 / NBRC 16129 / PRD-1).